Here is a 68-residue protein sequence, read N- to C-terminus: Large ribosomal subunit protein bL33c (68 aa).

This sequence belongs to the bacterial ribosomal protein bL33 family.

It localises to the plastid. Its subcellular location is the chloroplast. The chain is Large ribosomal subunit protein bL33c from Piper cenocladum (Ant piper).